A 239-amino-acid polypeptide reads, in one-letter code: Gag polyprotein (239 aa).

A compositionally biased stretch (basic and acidic residues) spans 124–141; sequence KGEEVGETTAQRDAKMAP. The segment at 124–144 is disordered; that stretch reads KGEEVGETTAQRDAKMAPEKM. The short motif at 172–175 is the PPXY motif element; the sequence is PPPY. Residues 184–214 form a disordered region; it reads LAGVGEQQGQGGDTPWGAEQPRAEPGHAGLA.

The protein localises to the virion. In Galliformes, this protein is Gag polyprotein (ev-1).